The primary structure comprises 725 residues: G-quartet DNA-binding protein TGP1 (725 aa).

Positions 241–258 (KKALTDVLQIHEKKERVH) match the Nuclear localization signal motif. Disordered regions lie at residues 252-284 (EKKE…LQET) and 468-614 (EIHK…GKRG). Residues 256 to 277 (RVHKQQNKNKNPRNAHKNHNRQ) show a composition bias toward basic residues. Over residues 468–478 (EIHKIDRERKR) the composition is skewed to basic and acidic residues. Low complexity predominate over residues 517-544 (NKYKNTSVQNNNNNKNQQRSQSQNQRPP). The span at 545–564 (RNYDNRQGGENRNNRQRNEN) shows a compositional bias: basic and acidic residues. Residues 565 to 593 (NRNNFNGNGHRVNNQNNQRNRNSSYPRNN) show a composition bias toward low complexity.

In terms of processing, the N-terminus is blocked.

Its subcellular location is the nucleus. Functionally, binds specifically to parallel G4-DNA, a four-stranded structure stabilized by tetrads of hydrogen-bonded guanines. This Tetrahymena thermophila protein is G-quartet DNA-binding protein TGP1 (TGP1).